The primary structure comprises 165 residues: Xanthine-guanine phosphoribosyltransferase (165 aa).

Residues 41-42 (RG) and 98-106 (DDLTDTGKT) each bind 5-phospho-alpha-D-ribose 1-diphosphate. Asp99 contacts Mg(2+). Guanine is bound by residues Asp102 and Ile145. Xanthine is bound by residues Asp102 and Ile145. Residues 102-106 (DTGKT) and 144-145 (WI) each bind GMP.

This sequence belongs to the purine/pyrimidine phosphoribosyltransferase family. XGPT subfamily. In terms of assembly, homotetramer. Requires Mg(2+) as cofactor.

It localises to the cell inner membrane. The enzyme catalyses GMP + diphosphate = guanine + 5-phospho-alpha-D-ribose 1-diphosphate. It catalyses the reaction XMP + diphosphate = xanthine + 5-phospho-alpha-D-ribose 1-diphosphate. It carries out the reaction IMP + diphosphate = hypoxanthine + 5-phospho-alpha-D-ribose 1-diphosphate. Its pathway is purine metabolism; GMP biosynthesis via salvage pathway; GMP from guanine: step 1/1. The protein operates within purine metabolism; XMP biosynthesis via salvage pathway; XMP from xanthine: step 1/1. Its function is as follows. Purine salvage pathway enzyme that catalyzes the transfer of the ribosyl-5-phosphate group from 5-phospho-alpha-D-ribose 1-diphosphate (PRPP) to the N9 position of the 6-oxopurines guanine and xanthine to form the corresponding ribonucleotides GMP (guanosine 5'-monophosphate) and XMP (xanthosine 5'-monophosphate), with the release of PPi. To a lesser extent, also acts on hypoxanthine. This Brucella anthropi (strain ATCC 49188 / DSM 6882 / CCUG 24695 / JCM 21032 / LMG 3331 / NBRC 15819 / NCTC 12168 / Alc 37) (Ochrobactrum anthropi) protein is Xanthine-guanine phosphoribosyltransferase.